A 500-amino-acid chain; its full sequence is NAD(P)H-quinone oxidoreductase chain 4, chloroplastic (500 aa).

14 helical membrane-spanning segments follow: residues 4–24 (FPWL…IFFL), 37–57 (ISIC…HFQL), 87–107 (LGSI…AWPI), 113–130 (LFYF…GLFS), 134–154 (LLLF…LLSM), 167–187 (FILY…GMGL), 211–231 (ILLY…IPLH), 242–262 (HYST…YGLI), 272–292 (AHYL…IYAA), 313–333 (MGFI…GAIL), 334–354 (QILS…TASD), 386–406 (LALP…GLIT), 417–437 (LITF…LSML), and 462–482 (LFIL…PDFV).

This sequence belongs to the complex I subunit 4 family.

The protein resides in the plastid. It is found in the chloroplast thylakoid membrane. It carries out the reaction a plastoquinone + NADH + (n+1) H(+)(in) = a plastoquinol + NAD(+) + n H(+)(out). The catalysed reaction is a plastoquinone + NADPH + (n+1) H(+)(in) = a plastoquinol + NADP(+) + n H(+)(out). This chain is NAD(P)H-quinone oxidoreductase chain 4, chloroplastic (ndhD), found in Triticum aestivum (Wheat).